The chain runs to 215 residues: NADH-quinone oxidoreductase subunit C (215 aa).

It belongs to the complex I 30 kDa subunit family. As to quaternary structure, NDH-1 is composed of 14 different subunits. Subunits NuoB, C, D, E, F, and G constitute the peripheral sector of the complex.

It localises to the cell inner membrane. It catalyses the reaction a quinone + NADH + 5 H(+)(in) = a quinol + NAD(+) + 4 H(+)(out). In terms of biological role, NDH-1 shuttles electrons from NADH, via FMN and iron-sulfur (Fe-S) centers, to quinones in the respiratory chain. The immediate electron acceptor for the enzyme in this species is believed to be ubiquinone. Couples the redox reaction to proton translocation (for every two electrons transferred, four hydrogen ions are translocated across the cytoplasmic membrane), and thus conserves the redox energy in a proton gradient. This Methylobacterium radiotolerans (strain ATCC 27329 / DSM 1819 / JCM 2831 / NBRC 15690 / NCIMB 10815 / 0-1) protein is NADH-quinone oxidoreductase subunit C.